The sequence spans 942 residues: Mitogen-activated protein kinase kinase kinase 14 (942 aa).

Residues 136–152 (GKRHGKARKKRRKKRSK) show a composition bias toward basic residues. 2 disordered regions span residues 136 to 156 (GKRHGKARKKRRKKRSKSLAQ) and 291 to 326 (VSGQRPLPGPPHLSQLAHGDSQKPLPGPHLESSCPS). The Protein kinase domain occupies 402–657 (MTHQPRVGRG…ELRRKVGKAL (256 aa)). Residues 403–655 (THQPRVGRGS…AMELRRKVGK (253 aa)) are interaction with ZFP91. Residues 408–416 (VGRGSFGEV) and lysine 431 contribute to the ATP site. The Proton acceptor role is filled by aspartate 517. Threonine 561 is modified (phosphothreonine). Disordered stretches follow at residues 660–756 (VGGL…FPDR) and 801–823 (SDDSEKNPSKASQSSRDTLSSGV). The span at 707 to 720 (EPQPPLPPEPPEPS) shows a compositional bias: pro residues. Residues 809–823 (SKASQSSRDTLSSGV) are compositionally biased toward polar residues.

The protein belongs to the protein kinase superfamily. STE Ser/Thr protein kinase family. MAP kinase kinase kinase subfamily. As to quaternary structure, interacts with TRAF2, TRAF3, TRAF5, TRAF6, IKKA and NF-kappa-B2/P100. Interacts with PELI3. Interacts with NIBP; the interaction is direct. Interacts with ARRB1 and ARRB2. Interacts with GRB10. Interacts with ZFP91. Interacts with NLRP12; this interaction promotes proteasomal degradation of MAP3K14. Directly interacts with DDX3X. Interacts (via C-terminus and kinase domain) with PPPC3A (via N-terminus) and PPP3CB. In terms of processing, phosphorylation at Thr-561 is required to activate its kinase activity and 'Lys-63'-linked polyubiquitination. Phosphorylated by CHUK/IKKA leading to MAP3K14 destabilization. Autophosphorylated. Ubiquitinated. Undergoes both 'Lys-48'- and 'Lys-63'-linked polyubiquitination. 'Lys-48'-linked polyubiquitination leads to its degradation by the proteasome, while 'Lys-63'-linked polyubiquitination stabilizes and activates it.

Its subcellular location is the cytoplasm. The catalysed reaction is L-seryl-[protein] + ATP = O-phospho-L-seryl-[protein] + ADP + H(+). It catalyses the reaction L-threonyl-[protein] + ATP = O-phospho-L-threonyl-[protein] + ADP + H(+). In terms of biological role, lymphotoxin beta-activated kinase which seems to be exclusively involved in the activation of NF-kappa-B and its transcriptional activity. Phosphorylates CHUK/IKKA. Promotes proteolytic processing of NFKB2/P100, which leads to activation of NF-kappa-B via the non-canonical pathway. Has an essential role in the non-canonical NF-kappa-B signalining that regulates genes encoding molecules involved in B-cell survival, lymphoid organogenesis, and immune response. Could act in a receptor-selective manner. The sequence is that of Mitogen-activated protein kinase kinase kinase 14 from Mus musculus (Mouse).